The primary structure comprises 495 residues: Glutamyl-tRNA(Gln) amidotransferase subunit A (495 aa).

Residues K75 and S150 each act as charge relay system in the active site. The Acyl-ester intermediate role is filled by S174.

Belongs to the amidase family. GatA subfamily. As to quaternary structure, heterotrimer of A, B and C subunits.

The enzyme catalyses L-glutamyl-tRNA(Gln) + L-glutamine + ATP + H2O = L-glutaminyl-tRNA(Gln) + L-glutamate + ADP + phosphate + H(+). Its function is as follows. Allows the formation of correctly charged Gln-tRNA(Gln) through the transamidation of misacylated Glu-tRNA(Gln) in organisms which lack glutaminyl-tRNA synthetase. The reaction takes place in the presence of glutamine and ATP through an activated gamma-phospho-Glu-tRNA(Gln). This is Glutamyl-tRNA(Gln) amidotransferase subunit A from Paraburkholderia xenovorans (strain LB400).